The chain runs to 469 residues: Aspartyl/glutamyl-tRNA(Asn/Gln) amidotransferase subunit B (469 aa).

It belongs to the GatB/GatE family. GatB subfamily. Heterotrimer of A, B and C subunits.

It catalyses the reaction L-glutamyl-tRNA(Gln) + L-glutamine + ATP + H2O = L-glutaminyl-tRNA(Gln) + L-glutamate + ADP + phosphate + H(+). It carries out the reaction L-aspartyl-tRNA(Asn) + L-glutamine + ATP + H2O = L-asparaginyl-tRNA(Asn) + L-glutamate + ADP + phosphate + 2 H(+). Allows the formation of correctly charged Asn-tRNA(Asn) or Gln-tRNA(Gln) through the transamidation of misacylated Asp-tRNA(Asn) or Glu-tRNA(Gln) in organisms which lack either or both of asparaginyl-tRNA or glutaminyl-tRNA synthetases. The reaction takes place in the presence of glutamine and ATP through an activated phospho-Asp-tRNA(Asn) or phospho-Glu-tRNA(Gln). The protein is Aspartyl/glutamyl-tRNA(Asn/Gln) amidotransferase subunit B of Methanococcus maripaludis (strain C6 / ATCC BAA-1332).